Here is a 447-residue protein sequence, read N- to C-terminus: Phosphoglucosamine mutase (447 aa).

The active-site Phosphoserine intermediate is the serine 100. 4 residues coordinate Mg(2+): serine 100, aspartate 239, aspartate 241, and aspartate 243. Serine 100 carries the post-translational modification Phosphoserine.

The protein belongs to the phosphohexose mutase family. It depends on Mg(2+) as a cofactor. In terms of processing, activated by phosphorylation.

It carries out the reaction alpha-D-glucosamine 1-phosphate = D-glucosamine 6-phosphate. Catalyzes the conversion of glucosamine-6-phosphate to glucosamine-1-phosphate. This is Phosphoglucosamine mutase from Halalkalibacterium halodurans (strain ATCC BAA-125 / DSM 18197 / FERM 7344 / JCM 9153 / C-125) (Bacillus halodurans).